Here is a 167-residue protein sequence, read N- to C-terminus: MSTPENDQADGPRMRRGRRLAVDVGDARIGVASCDPDGILATPVETVPGRDVPAAHRRLRQLVAEYEPIEVVVGLPRSLKGGEGPAAAKVRRFTQELAKGIAPVPVRLVDERMTTVTASQGLRASGVKSKKGRSVIDQAAAVIILQQALESERVSGRPPGEGVEVVI.

It belongs to the YqgF nuclease family.

The protein localises to the cytoplasm. Functionally, could be a nuclease involved in processing of the 5'-end of pre-16S rRNA. This Streptomyces coelicolor (strain ATCC BAA-471 / A3(2) / M145) protein is Putative pre-16S rRNA nuclease.